The chain runs to 72 residues: Translation initiation factor IF-1 (72 aa).

An S1-like domain is found at 1 to 72 (MAKEGAIEVE…TRGRIVYRYK (72 aa)).

The protein belongs to the IF-1 family. Component of the 30S ribosomal translation pre-initiation complex which assembles on the 30S ribosome in the order IF-2 and IF-3, IF-1 and N-formylmethionyl-tRNA(fMet); mRNA recruitment can occur at any time during PIC assembly.

It is found in the cytoplasm. Its function is as follows. One of the essential components for the initiation of protein synthesis. Stabilizes the binding of IF-2 and IF-3 on the 30S subunit to which N-formylmethionyl-tRNA(fMet) subsequently binds. Helps modulate mRNA selection, yielding the 30S pre-initiation complex (PIC). Upon addition of the 50S ribosomal subunit IF-1, IF-2 and IF-3 are released leaving the mature 70S translation initiation complex. The protein is Translation initiation factor IF-1 of Corynebacterium diphtheriae (strain ATCC 700971 / NCTC 13129 / Biotype gravis).